Reading from the N-terminus, the 261-residue chain is Hemin import ATP-binding protein HmuV (261 aa).

The region spanning 7–243 is the ABC transporter domain; that stretch reads LRGQNLSLQF…EIIDAVYGYK (237 aa). Residue 39–46 coordinates ATP; sequence GPNGAGKS.

It belongs to the ABC transporter superfamily. Heme (hemin) importer (TC 3.A.1.14.5) family. The complex is composed of two ATP-binding proteins (HmuV), two transmembrane proteins (HmuU) and a solute-binding protein (HmuT).

Its subcellular location is the cell inner membrane. Functionally, part of the ABC transporter complex HmuTUV involved in hemin import. Responsible for energy coupling to the transport system. This chain is Hemin import ATP-binding protein HmuV, found in Vibrio vulnificus (strain YJ016).